We begin with the raw amino-acid sequence, 340 residues long: Sesquiterpene synthase 6 (340 aa).

Mg(2+)-binding residues include Asp-90, Asn-229, Ser-233, and Glu-237. The DDXXD motif signature appears at 90 to 94 (DDITD). Residues 229 to 237 (NDIYSFNNE) carry the NSE/DTE motif motif. Arg-316 and Tyr-317 together coordinate (2E,6E)-farnesyl diphosphate.

It belongs to the terpene synthase family. Mg(2+) is required as a cofactor.

It carries out the reaction (2E,6E)-farnesyl diphosphate = delta-cadinene + diphosphate. The catalysed reaction is (2E,6E)-farnesyl diphosphate = bicyclogermacrene + diphosphate. Functionally, terpene cyclase that catalyzes the cyclization of farnesyl diphosphate (FPP) to various sesquiterpenes, including bicycloelemene, alpha-gurjunene, 9-epi-caryophylene, bicyclosesquiphellandrene, bicyclogermacrene and delta-cadinene. The protein is Sesquiterpene synthase 6 of Postia placenta (strain ATCC 44394 / Madison 698-R) (Brown rot fungus).